Reading from the N-terminus, the 153-residue chain is 6,7-dimethyl-8-ribityllumazine synthase (153 aa).

Residues Phe-22, 56–58, and 80–82 contribute to the 5-amino-6-(D-ribitylamino)uracil site; these read AFE and AVI. Residue 85 to 86 participates in (2S)-2-hydroxy-3-oxobutyl phosphate binding; that stretch reads ST. His-88 acts as the Proton donor in catalysis. Phe-113 contacts 5-amino-6-(D-ribitylamino)uracil. Arg-127 contributes to the (2S)-2-hydroxy-3-oxobutyl phosphate binding site.

It belongs to the DMRL synthase family.

The enzyme catalyses (2S)-2-hydroxy-3-oxobutyl phosphate + 5-amino-6-(D-ribitylamino)uracil = 6,7-dimethyl-8-(1-D-ribityl)lumazine + phosphate + 2 H2O + H(+). Its pathway is cofactor biosynthesis; riboflavin biosynthesis; riboflavin from 2-hydroxy-3-oxobutyl phosphate and 5-amino-6-(D-ribitylamino)uracil: step 1/2. In terms of biological role, catalyzes the formation of 6,7-dimethyl-8-ribityllumazine by condensation of 5-amino-6-(D-ribitylamino)uracil with 3,4-dihydroxy-2-butanone 4-phosphate. This is the penultimate step in the biosynthesis of riboflavin. The sequence is that of 6,7-dimethyl-8-ribityllumazine synthase from Clostridium botulinum (strain Alaska E43 / Type E3).